A 279-amino-acid chain; its full sequence is MPARRYKPTSPGRRNSSVLTRDSVTKEKPEKSLLAKLHKTGGRNVHGRITTRHKGGGHKRRYRIIDFKRNKDGVPATVAAIEYDPNRSANIALLHYHDGEKRYILAPRNLTVGSVVMSGPEAEVDVGNALPLANIPVGTTVHAVELEPGRGAQLARSAGTSAQIIAREGNLVTLRLPSGERRRVRAECRATVGVVGNQSHQNVRWGKAGRKRHLGIRPTVRGTVMNPVDHPHGGGEGKSTPGRAPVTPWGKITQGKPTRKKRKRSDAMIVARRKKGRRR.

2 disordered regions span residues 1–28 and 221–279; these read MPAR…TKEK and RGTV…GRRR. A compositionally biased stretch (polar residues) spans 12–22; it reads GRRNSSVLTRD.

It belongs to the universal ribosomal protein uL2 family. As to quaternary structure, part of the 50S ribosomal subunit. Forms a bridge to the 30S subunit in the 70S ribosome.

One of the primary rRNA binding proteins. Required for association of the 30S and 50S subunits to form the 70S ribosome, for tRNA binding and peptide bond formation. It has been suggested to have peptidyltransferase activity; this is somewhat controversial. Makes several contacts with the 16S rRNA in the 70S ribosome. In Rubrobacter xylanophilus (strain DSM 9941 / JCM 11954 / NBRC 16129 / PRD-1), this protein is Large ribosomal subunit protein uL2.